Here is a 417-residue protein sequence, read N- to C-terminus: uncharacterized protein (417 aa).

The first 21 residues, 1 to 21 (MPYYWGAILIGGVFLAGCTQN), serve as a signal peptide directing secretion.

This is an uncharacterized protein from Methanocaldococcus jannaschii (strain ATCC 43067 / DSM 2661 / JAL-1 / JCM 10045 / NBRC 100440) (Methanococcus jannaschii).